An 812-amino-acid polypeptide reads, in one-letter code: DNA translocase FtsK 1 (812 aa).

A compositionally biased stretch (basic residues) spans 1-11 (MTEKSHKKTAK). The tract at residues 1-36 (MTEKSHKKTAKGRAGSPSPTSARNKKADNGARGNKV) is disordered. Basic and acidic residues predominate over residues 25–36 (KKADNGARGNKV). A run of 5 helical transmembrane segments spans residues 63-83 (IGDA…ISLI), 116-136 (VGYY…CVML), 156-176 (IAAA…YFVL), 184-204 (LPVG…AWLL), and 210-230 (LLII…ISWL). The Cytoplasmic segment spans residues 231–812 (EFLNGAGRAV…RKILAHKDHL (582 aa)). One can recognise a FtsK domain in the interval 461–670 (GTPVVGDLAK…FTVQSKIDSR (210 aa)). Residue 481–486 (GSGKSV) coordinates ATP.

It belongs to the FtsK/SpoIIIE/SftA family. Homohexamer. Forms a ring that surrounds DNA.

The protein localises to the cell inner membrane. Essential cell division protein that coordinates cell division and chromosome segregation. The N-terminus is involved in assembly of the cell-division machinery. The C-terminus functions as a DNA motor that moves dsDNA in an ATP-dependent manner towards the dif recombination site, which is located within the replication terminus region. Translocation stops specifically at Xer-dif sites, where FtsK interacts with the Xer recombinase, allowing activation of chromosome unlinking by recombination. FtsK orienting polar sequences (KOPS) guide the direction of DNA translocation. FtsK can remove proteins from DNA as it translocates, but translocation stops specifically at XerCD-dif site, thereby preventing removal of XerC and XerD from dif. This is DNA translocase FtsK 1 (ftsK1) from Neisseria meningitidis serogroup A / serotype 4A (strain DSM 15465 / Z2491).